A 442-amino-acid chain; its full sequence is Probable serine/threonine-protein kinase kinase DDB_G0280643 (442 aa).

A Protein kinase domain is found at 74–398 (IDPNTIVDCG…VNEILESPYF (325 aa)). ATP-binding positions include 80–88 (VDCGTNGIM) and Lys-103. Asp-231 acts as the Proton acceptor in catalysis.

The protein belongs to the protein kinase superfamily. CMGC Ser/Thr protein kinase family. MAP kinase subfamily.

The catalysed reaction is L-seryl-[protein] + ATP = O-phospho-L-seryl-[protein] + ADP + H(+). It carries out the reaction L-threonyl-[protein] + ATP = O-phospho-L-threonyl-[protein] + ADP + H(+). The polypeptide is Probable serine/threonine-protein kinase kinase DDB_G0280643 (Dictyostelium discoideum (Social amoeba)).